The following is a 359-amino-acid chain: MTQQIQVDLGERSYPIYIGQSLMSDSETLSRYLLKKRILIVTNETVAPLYLKQIQDTMASFGEVSSVILPDGEQFKDLTHLDSIFTALLQRNYARDSVLVALGGGVIGDMTGFAAACYQRGVDFIQIPTTLLSQVDSSVGGKTAVNHPLGKNMIGAFYQPQIVIIDTECLQTLPAREFAAGMAEVIKYGIMWDAEFFQWLENNVQALKSLDTQALVYAISRCCEIKADVVSQDETEQGVRALLNLGHTFGHAIEAEMGYGNWLHGEAVAAGTVLAAQTAKSMGLIDESIVRRIVQLFHAFDLPITAPESMDFDSFIKHMRRDKKVLGGQIRLVLPTAIGRADVFSQVPESTLEQVICCA.

Residues 71-76 (DGEQFK), 105-109 (GVIGD), 129-130 (TT), K142, K151, and 169-172 (CLQT) contribute to the NAD(+) site. Zn(2+) is bound by residues E184, H247, and H264.

This sequence belongs to the sugar phosphate cyclases superfamily. Dehydroquinate synthase family. Requires Co(2+) as cofactor. Zn(2+) serves as cofactor. It depends on NAD(+) as a cofactor.

Its subcellular location is the cytoplasm. It carries out the reaction 7-phospho-2-dehydro-3-deoxy-D-arabino-heptonate = 3-dehydroquinate + phosphate. It functions in the pathway metabolic intermediate biosynthesis; chorismate biosynthesis; chorismate from D-erythrose 4-phosphate and phosphoenolpyruvate: step 2/7. In terms of biological role, catalyzes the conversion of 3-deoxy-D-arabino-heptulosonate 7-phosphate (DAHP) to dehydroquinate (DHQ). This chain is 3-dehydroquinate synthase, found in Shewanella sp. (strain MR-4).